The following is a 392-amino-acid chain: Probable glucan endo-1,6-beta-glucosidase B (392 aa).

A signal peptide spans 1-18; sequence MKVTRLAVLNTLATLTVA. The N-linked (GlcNAc...) asparagine glycan is linked to asparagine 31. The active-site Proton donor is the glutamate 220. Glutamate 322 serves as the catalytic Nucleophile.

The protein belongs to the glycosyl hydrolase 5 (cellulase A) family.

Its subcellular location is the secreted. The catalysed reaction is Random hydrolysis of (1-&gt;6)-linkages in (1-&gt;6)-beta-D-glucans.. Functionally, beta-glucanases participate in the metabolism of beta-glucan, the main structural component of the cell wall. Acts on lutean, pustulan and 1,6-oligo-beta-D-glucosides. The sequence is that of Probable glucan endo-1,6-beta-glucosidase B (exgB) from Aspergillus flavus (strain ATCC 200026 / FGSC A1120 / IAM 13836 / NRRL 3357 / JCM 12722 / SRRC 167).